A 752-amino-acid chain; its full sequence is Photosystem I P700 chlorophyll a apoprotein A1 (752 aa).

8 consecutive transmembrane segments (helical) span residues 73–96 (IFSAHFGQLAIIFLWVSQAYFHGA), 159–182 (LYWTAMGGLMMSALMVFAGWFHYH), 198–222 (MNHHLAGLLGLGCLSWSGHQIHISL), 294–312 (TAHHHLALAVLFIFAGHMY), 349–372 (WHAQLAINLAMMGSLSIIVAHHMY), 388–414 (LSLFTHHMWIGGFCVCGAAAHGAIFMV), 436–458 (AIISHLNWVCIFLGTHSFGLYIH), and 533–551 (FLVHHIHAFTIHVTVLILL). C575 and C584 together coordinate [4Fe-4S] cluster. The next 2 membrane-spanning stretches (helical) occupy residues 591-612 (HIFLGLFWMYNCISVVIFHFSW) and 666-688 (LSAYGIIFLGAHFIWAFSLMFLF). H677 contacts chlorophyll a'. Chlorophyll a is bound by residues M685 and Y693. W694 serves as a coordination point for phylloquinone. A helical membrane pass occupies residues 726–746 (AVGLAHYLLGGIGTTWSFFLA).

It belongs to the PsaA/PsaB family. As to quaternary structure, the PsaA/B heterodimer binds the P700 chlorophyll special pair and subsequent electron acceptors. PSI consists of a core antenna complex that captures photons, and an electron transfer chain that converts photonic excitation into a charge separation. The eukaryotic PSI reaction center is composed of at least 11 subunits. P700 is a chlorophyll a/chlorophyll a' dimer, A0 is one or more chlorophyll a, A1 is one or both phylloquinones and FX is a shared 4Fe-4S iron-sulfur center. is required as a cofactor.

The protein localises to the plastid. Its subcellular location is the chloroplast thylakoid membrane. The enzyme catalyses reduced [plastocyanin] + hnu + oxidized [2Fe-2S]-[ferredoxin] = oxidized [plastocyanin] + reduced [2Fe-2S]-[ferredoxin]. In terms of biological role, psaA and PsaB bind P700, the primary electron donor of photosystem I (PSI), as well as the electron acceptors A0, A1 and FX. PSI is a plastocyanin/cytochrome c6-ferredoxin oxidoreductase, converting photonic excitation into a charge separation, which transfers an electron from the donor P700 chlorophyll pair to the spectroscopically characterized acceptors A0, A1, FX, FA and FB in turn. Oxidized P700 is reduced on the lumenal side of the thylakoid membrane by plastocyanin or cytochrome c6. The polypeptide is Photosystem I P700 chlorophyll a apoprotein A1 (Emiliania huxleyi (Coccolithophore)).